We begin with the raw amino-acid sequence, 225 residues long: Cytidylate kinase (225 aa).

12 to 20 serves as a coordination point for ATP; it reads GPSGAGKGT.

This sequence belongs to the cytidylate kinase family. Type 1 subfamily.

It is found in the cytoplasm. It carries out the reaction CMP + ATP = CDP + ADP. The enzyme catalyses dCMP + ATP = dCDP + ADP. This is Cytidylate kinase from Stenotrophomonas maltophilia (strain K279a).